The primary structure comprises 469 residues: Mitochondrial adenyl nucleotide antiporter SLC25A25 (469 aa).

Residues 1–165 form a regulatory N-terminal domain region; the sequence is MLCLCLYVPI…LYWKHSTIFD (165 aa). Over 1–189 the chain is Mitochondrial intermembrane; sequence MLCLCLYVPI…ERQTGMWWRH (189 aa). EF-hand domains lie at 47–80, 78–113, and 114–149; these read TYRQ…QDHE, DHEK…LGVK, and ISEQ…HPVE. Residues aspartate 60, aspartate 62, aspartate 64, glutamine 66, and glutamate 71 each contribute to the Ca(2+) site. The segment at 151–160 is linker region; it reads IPEIILYWKH. Residues 166–469 are C-terminal transmembrane transporter domain; it reads VGENLTVPDE…LKITLGVQSR (304 aa). Solcar repeat units follow at residues 184–270, 278–363, and 375–463; these read GMWW…MKRL, LRIH…LKNT, and PGVF…LKIT. Residues 190-207 traverse the membrane as a helical segment; that stretch reads LVAGGGAGAVSRTCTAPL. Residues 208–244 are Mitochondrial matrix-facing; that stretch reads DRLKVLMQVHASRSNNMCIIGGFTQMIREGGAKSLWR. A helical transmembrane segment spans residues 245 to 264; it reads GNGINVLKIAPESAIKFMAY. At 265–287 the chain is on the mitochondrial intermembrane side; the sequence is EQMKRLVGSDQETLRIHERLVAG. A helical membrane pass occupies residues 288–301; that stretch reads SLAGAIAQSSIYPM. Residues 302–337 lie on the Mitochondrial matrix side of the membrane; it reads EVLKTRMALRKTGQYSGMLDCAKRILAKEGVAAFYK. Residues 338–357 traverse the membrane as a helical segment; it reads GYIPNMLGIIPYAGIDLAVY. Residues 358 to 380 lie on the Mitochondrial intermembrane side of the membrane; that stretch reads ETLKNTWLQRYAVNSADPGVFVL. Residues 381–398 form a helical membrane-spanning segment; it reads LACGTISSTCGQLASYPL. Residues 399–437 are Mitochondrial matrix-facing; the sequence is ALVRTRMQAQASIEGAPEVTMSSLFKQILRTEGAFGLYR. The chain crosses the membrane as a helical span at residues 438–457; sequence GLAPNFMKVIPAVSISYVVY. Over 458 to 469 the chain is Mitochondrial intermembrane; the sequence is ENLKITLGVQSR.

Belongs to the mitochondrial carrier (TC 2.A.29) family. As to expression, mainly present in the liver and the skeletal muscle (at protein level).

The protein localises to the mitochondrion inner membrane. The enzyme catalyses Mg(2+)(out) + phosphate(in) + ATP(out) = Mg(2+)(in) + phosphate(out) + ATP(in). With respect to regulation, activated by an increase in cytosolic calcium levels that induce a conformational change of the N-terminal regulatory domain, uncapping the channel and allowing transport. Electroneutral antiporter that most probably mediates the transport of adenyl nucleotides through the inner mitochondrial membrane. Originally identified as an ATP-magnesium/inorganic phosphate antiporter, it could have a broader specificity for adenyl nucleotides. By regulating the mitochondrial matrix adenyl nucleotide pool could adapt to changing cellular energetic demands and indirectly regulate adenyl nucleotide-dependent metabolic pathways. This chain is Mitochondrial adenyl nucleotide antiporter SLC25A25, found in Rattus norvegicus (Rat).